A 270-amino-acid polypeptide reads, in one-letter code: 3-phenylpropionate-dihydrodiol/cinnamic acid-dihydrodiol dehydrogenase (270 aa).

Residue 10–34 (FITGGGSGLGLALVERFIEEGAQVA) participates in NAD(+) binding. Ser-143 serves as a coordination point for substrate. Residue Tyr-156 is the Proton acceptor of the active site.

Belongs to the short-chain dehydrogenases/reductases (SDR) family.

It carries out the reaction 3-(cis-5,6-dihydroxycyclohexa-1,3-dien-1-yl)propanoate + NAD(+) = 3-(2,3-dihydroxyphenyl)propanoate + NADH + H(+). It catalyses the reaction (2E)-3-(cis-5,6-dihydroxycyclohexa-1,3-dien-1-yl)prop-2-enoate + NAD(+) = (2E)-3-(2,3-dihydroxyphenyl)prop-2-enoate + NADH + H(+). The protein operates within aromatic compound metabolism; 3-phenylpropanoate degradation. Its function is as follows. Converts 3-phenylpropionate-dihydrodiol (PP-dihydrodiol) and cinnamic acid-dihydrodiol (CI-dihydrodiol) into 3-(2,3-dihydroxylphenyl)propanoic acid (DHPP) and 2,3-dihydroxicinnamic acid (DHCI), respectively. In Escherichia coli O8 (strain IAI1), this protein is 3-phenylpropionate-dihydrodiol/cinnamic acid-dihydrodiol dehydrogenase.